The chain runs to 267 residues: Geranylgeranylglyceryl phosphate synthase (267 aa).

Mg(2+)-binding residues include Asp-23 and Ser-52. Sn-glycerol 1-phosphate is bound by residues 173–179 (YLEAGSG), 205–206 (GG), and 227–228 (GT).

This sequence belongs to the GGGP/HepGP synthase family. Group II subfamily. Requires Mg(2+) as cofactor.

Its subcellular location is the cytoplasm. It catalyses the reaction sn-glycerol 1-phosphate + (2E,6E,10E)-geranylgeranyl diphosphate = sn-3-O-(geranylgeranyl)glycerol 1-phosphate + diphosphate. It participates in membrane lipid metabolism; glycerophospholipid metabolism. In terms of biological role, prenyltransferase that catalyzes the transfer of the geranylgeranyl moiety of geranylgeranyl diphosphate (GGPP) to the C3 hydroxyl of sn-glycerol-1-phosphate (G1P). This reaction is the first ether-bond-formation step in the biosynthesis of archaeal membrane lipids. This Caldivirga maquilingensis (strain ATCC 700844 / DSM 13496 / JCM 10307 / IC-167) protein is Geranylgeranylglyceryl phosphate synthase.